The primary structure comprises 299 residues: Taste receptor type 2 member 45 (299 aa).

A topological domain (extracellular) is located at residue methionine 1. Residues 2–22 (ITFLPIIFSILVVVTFVIGNF) traverse the membrane as a helical segment. Residues 23–55 (ANGFIALVNSTEWVKRQKISFADQIVTALAVSR) are Cytoplasmic-facing. Residues 56-76 (VGLLWVLLLNWYSTVLNPAFC) form a helical membrane-spanning segment. At 77 to 98 (SVELRTTAYNIWAVTGHFSNWP) the chain is on the extracellular side. A helical membrane pass occupies residues 99–119 (ATSLSIFYLLKIANFSNLIFL). Residues 120-126 (RLKRRVK) are Cytoplasmic-facing. A helical transmembrane segment spans residues 127-147 (SVILVVLLGPLLFLACHLFVV). Over 148–178 (NMNQIVWTKEYEGNMTWKIKLRRAMYLSDTT) the chain is Extracellular. An N-linked (GlcNAc...) asparagine glycan is attached at asparagine 161. The helical transmembrane segment at 179 to 199 (VTMLANLVPFTVTLISFLLLV) threads the bilayer. Residues 200–229 (CSLCKHLKKMQLHGKGSQDPSTKVHIKVLQ) lie on the Cytoplasmic side of the membrane. Residues 230 to 250 (TVISFFLLRAIYFVSVIISVW) traverse the membrane as a helical segment. At 251-259 (SFKNLENKP) the chain is on the extracellular side. Residues 260–280 (VFMFCQAIGFSCSSAHPFILI) traverse the membrane as a helical segment. The Cytoplasmic portion of the chain corresponds to 281 to 299 (WGNKKLKQTYLSVLWQMRY).

Belongs to the G-protein coupled receptor T2R family. Expressed in subsets of taste receptor cells of the tongue and exclusively in gustducin-positive cells.

The protein resides in the membrane. In terms of biological role, receptor that may play a role in the perception of bitterness and is gustducin-linked. May play a role in sensing the chemical composition of the gastrointestinal content. The activity of this receptor may stimulate alpha gustducin, mediate PLC-beta-2 activation and lead to the gating of TRPM5. The chain is Taste receptor type 2 member 45 (TAS2R45) from Homo sapiens (Human).